An 837-amino-acid polypeptide reads, in one-letter code: Phosphatidylinositol-glycan-specific phospholipase D (837 aa).

The first 23 residues, 1 to 23 (MSAGRLWSSLLLLLPLFCSKSSS), serve as a signal peptide directing secretion. 5 N-linked (GlcNAc...) asparagine glycosylation sites follow: Asn-94, Asn-267, Asn-287, Asn-303, and Asn-317. FG-GAP repeat units follow at residues 364–425 (SPSA…GLPP), 431–492 (NKEG…GRLS), 494–554 (SPNV…RNDK), 561–619 (EADW…SLGK), 629–689 (QSTI…GATR), 701–767 (ALLS…TLGD), and 785–837 (QYVL…FSSD). Asn-477, Asn-496, Asn-586, Asn-599, and Asn-655 each carry an N-linked (GlcNAc...) asparagine glycan.

This sequence belongs to the GPLD1 family. As to quaternary structure, monomer. Widely expressed.

The protein resides in the secreted. It catalyses the reaction a 6-(alpha-D-glucosaminyl)-1-(1,2-diacyl-sn-glycero-3-phospho)-1D-myo-inositol + H2O = 6-(alpha-D-glucosaminyl)-1D-myo-inositol + a 1,2-diacyl-sn-glycero-3-phosphate + H(+). Functionally, this protein hydrolyzes the inositol phosphate linkage in proteins anchored by phosphatidylinositol glycans (GPI-anchor) thus releasing these proteins from the membrane. The sequence is that of Phosphatidylinositol-glycan-specific phospholipase D (Gpld1) from Mus musculus (Mouse).